The chain runs to 427 residues: Glutamate-1-semialdehyde 2,1-aminomutase 1 (427 aa).

K265 carries the post-translational modification N6-(pyridoxal phosphate)lysine.

This sequence belongs to the class-III pyridoxal-phosphate-dependent aminotransferase family. HemL subfamily. In terms of assembly, homodimer. Pyridoxal 5'-phosphate is required as a cofactor.

It localises to the cytoplasm. It carries out the reaction (S)-4-amino-5-oxopentanoate = 5-aminolevulinate. It participates in porphyrin-containing compound metabolism; protoporphyrin-IX biosynthesis; 5-aminolevulinate from L-glutamyl-tRNA(Glu): step 2/2. The chain is Glutamate-1-semialdehyde 2,1-aminomutase 1 from Lachnoclostridium phytofermentans (strain ATCC 700394 / DSM 18823 / ISDg) (Clostridium phytofermentans).